The following is a 146-amino-acid chain: MAVRIRMKKMGRTHRPFFRVCAVDQRNPRDGRVIEELGTYDPMCPETDARTTLKADRVDYWIGVGAQPSDKVAVLIKKYGTDGSHLEAQKAAVERLGRRKDYTPPPEAPAPKAAPVAEAPAEEAPAEEPAAEASTDDAPAAEATTE.

Over residues Ser-84–Tyr-102 the composition is skewed to basic and acidic residues. The disordered stretch occupies residues Ser-84–Glu-146. The span at Ala-110–Ala-119 shows a compositional bias: low complexity. Positions Pro-120 to Ala-130 are enriched in acidic residues. Residues Ala-131–Glu-146 are compositionally biased toward low complexity.

The protein belongs to the bacterial ribosomal protein bS16 family.

This Rhodopirellula baltica (strain DSM 10527 / NCIMB 13988 / SH1) protein is Small ribosomal subunit protein bS16.